The primary structure comprises 76 residues: Small proline-rich protein 2G (76 aa).

3 consecutive repeat copies span residues P21–L29, P30–P38, and P39–E47. Residues P21 to E47 form a 3 X 9 AA approximate tandem repeats region. Residues Q55–K76 are disordered.

This sequence belongs to the cornifin (SPRR) family. In terms of tissue distribution, expressed in uterus.

It localises to the cytoplasm. Cross-linked envelope protein of keratinocytes. It is a keratinocyte protein that first appears in the cell cytosol, but ultimately becomes cross-linked to membrane proteins by transglutaminase. All that results in the formation of an insoluble envelope beneath the plasma membrane. The sequence is that of Small proline-rich protein 2G (Sprr2g) from Mus musculus (Mouse).